The primary structure comprises 387 residues: [LysW]-aminoadipate semialdehyde/glutamate semialdehyde transaminase (387 aa).

Pyridoxal 5'-phosphate-binding positions include 96 to 97 (GT) and phenylalanine 123. A substrate-binding site is contributed by arginine 126. 207 to 210 (DEVQ) is a binding site for pyridoxal 5'-phosphate. Lysine 236 carries the N6-(pyridoxal phosphate)lysine modification. Substrate is bound at residue serine 264. Position 265 (threonine 265) interacts with pyridoxal 5'-phosphate.

This sequence belongs to the class-III pyridoxal-phosphate-dependent aminotransferase family. LysJ subfamily. Homodimer. Pyridoxal 5'-phosphate serves as cofactor.

Its subcellular location is the cytoplasm. It catalyses the reaction [amino-group carrier protein]-C-terminal-gamma-(L-lysyl)-L-glutamate + 2-oxoglutarate = [amino-group carrier protein]-C-terminal-N-(1-carboxy-5-oxopentan-1-yl)-L-glutamine + L-glutamate. It carries out the reaction [amino-group carrier protein]-C-terminal-gamma-(L-ornithyl)-L-glutamate + 2-oxoglutarate = [amino-group carrier protein]-C-terminal-gamma-(L-glutamyl-5-semialdehyde)-L-glutamate + L-glutamate. It functions in the pathway amino-acid biosynthesis; L-lysine biosynthesis via AAA pathway; L-lysine from L-alpha-aminoadipate (Thermus route): step 4/5. The protein operates within amino-acid biosynthesis; L-arginine biosynthesis. Functionally, involved in both the arginine and lysine biosynthetic pathways. The sequence is that of [LysW]-aminoadipate semialdehyde/glutamate semialdehyde transaminase from Sulfurisphaera tokodaii (strain DSM 16993 / JCM 10545 / NBRC 100140 / 7) (Sulfolobus tokodaii).